A 619-amino-acid chain; its full sequence is Eukaryotic translation initiation factor 3 subunit D (619 aa).

The interval 99–160 (QKQPHQRGRF…KWGARPPPKI (62 aa)) is disordered. The span at 100-121 (KQPHQRGRFRGNLRNQRGRGRG) shows a compositional bias: basic residues. An RNA gate region spans residues 288–302 (EFDLLTVNETAIEPP). The disordered stretch occupies residues 588–619 (TPAATETVATATTEATTPTTATKTTAPAAAQK).

Belongs to the eIF-3 subunit D family. In terms of assembly, component of the eukaryotic translation initiation factor 3 (eIF-3) complex.

The protein resides in the cytoplasm. Its function is as follows. mRNA cap-binding component of the eukaryotic translation initiation factor 3 (eIF-3) complex, which is involved in protein synthesis of a specialized repertoire of mRNAs and, together with other initiation factors, stimulates binding of mRNA and methionyl-tRNAi to the 40S ribosome. The eIF-3 complex specifically targets and initiates translation of a subset of mRNAs involved in cell proliferation. In the eIF-3 complex, eif3d specifically recognizes and binds the 7-methylguanosine cap of a subset of mRNAs. This is Eukaryotic translation initiation factor 3 subunit D from Aedes aegypti (Yellowfever mosquito).